The sequence spans 1021 residues: Putative 115 kDa protein in type-1 retrotransposable element R1DM (1021 aa).

The Reverse transcriptase domain maps to 479-741 (RCIRLGYFPA…RSCRYLGITV (263 aa)). A gag-like cysteine motif region spans residues 955–971 (CACGDPYEDWMHILCAC).

The chain is Putative 115 kDa protein in type-1 retrotransposable element R1DM (R1A1-element\ORF2) from Drosophila melanogaster (Fruit fly).